The following is a 258-amino-acid chain: Tryptophan synthase alpha chain (258 aa).

Active-site proton acceptor residues include Glu52 and Asp63.

The protein belongs to the TrpA family. Tetramer of two alpha and two beta chains.

It carries out the reaction (1S,2R)-1-C-(indol-3-yl)glycerol 3-phosphate + L-serine = D-glyceraldehyde 3-phosphate + L-tryptophan + H2O. The protein operates within amino-acid biosynthesis; L-tryptophan biosynthesis; L-tryptophan from chorismate: step 5/5. Its function is as follows. The alpha subunit is responsible for the aldol cleavage of indoleglycerol phosphate to indole and glyceraldehyde 3-phosphate. This is Tryptophan synthase alpha chain from Streptococcus pneumoniae (strain P1031).